A 470-amino-acid polypeptide reads, in one-letter code: UDP-N-acetylmuramate--L-alanine ligase (470 aa).

Residue 114-120 participates in ATP binding; that stretch reads GTHGKTT.

Belongs to the MurCDEF family.

The protein localises to the cytoplasm. The enzyme catalyses UDP-N-acetyl-alpha-D-muramate + L-alanine + ATP = UDP-N-acetyl-alpha-D-muramoyl-L-alanine + ADP + phosphate + H(+). The protein operates within cell wall biogenesis; peptidoglycan biosynthesis. In terms of biological role, cell wall formation. This chain is UDP-N-acetylmuramate--L-alanine ligase, found in Xanthobacter autotrophicus (strain ATCC BAA-1158 / Py2).